The sequence spans 444 residues: Type VII secretion system protein EssB (444 aa).

At 1–229 the chain is on the cytoplasmic side; that stretch reads MVKNHDPKNE…RKVGHTVFKW (229 aa). The helical transmembrane segment at 230 to 250 threads the bilayer; sequence VAIGMTTLSVLLIAFLAFLYF. Over 251–444 the chain is Extracellular; that stretch reads SVMKHNERIE…EKRQEAERKK (194 aa). Residues 366–444 form a disordered region; sequence KNNGDLSNDK…EKRQEAERKK (79 aa). Basic and acidic residues predominate over residues 372-444; sequence SNDKRSEETK…EKRQEAERKK (73 aa). Residues 387–443 are a coiled coil; sequence LQDILDKEKQVKDEKAKSEEEKAKAKDEKLKQQEENEKKQKEQAQKDKEKRQEAERK.

Belongs to the EssB family.

It localises to the cell membrane. In terms of biological role, component of the type VII secretion system (Ess). Required for the secretion of EsxA. The sequence is that of Type VII secretion system protein EssB from Staphylococcus aureus (strain MRSA252).